A 232-amino-acid chain; its full sequence is 2-C-methyl-D-erythritol 4-phosphate cytidylyltransferase (232 aa).

The protein belongs to the IspD/TarI cytidylyltransferase family. IspD subfamily.

The enzyme catalyses 2-C-methyl-D-erythritol 4-phosphate + CTP + H(+) = 4-CDP-2-C-methyl-D-erythritol + diphosphate. It functions in the pathway isoprenoid biosynthesis; isopentenyl diphosphate biosynthesis via DXP pathway; isopentenyl diphosphate from 1-deoxy-D-xylulose 5-phosphate: step 2/6. Catalyzes the formation of 4-diphosphocytidyl-2-C-methyl-D-erythritol from CTP and 2-C-methyl-D-erythritol 4-phosphate (MEP). This Vibrio cholerae serotype O1 (strain ATCC 39315 / El Tor Inaba N16961) protein is 2-C-methyl-D-erythritol 4-phosphate cytidylyltransferase.